The primary structure comprises 1712 residues: Neurexin-2 (1712 aa).

The signal sequence occupies residues 1–28; that stretch reads MASGSRWRPTPPPLLLLLLLALAARADG. The 178-residue stretch at 29-206 folds into the Laminin G-like 1 domain; the sequence is LEFGGGPGQW…LRGATADPLC (178 aa). At 29 to 1636 the chain is on the extracellular side; the sequence is LEFGGGPGQW…EVIRESSSTT (1608 aa). The N-linked (GlcNAc...) asparagine glycan is linked to asparagine 60. In terms of domain architecture, EGF-like 1 spans 202–242; the sequence is ADPLCAPARNPCANGGLCTVLAPGEVGCDCSHTGFGGKFCS. Disulfide bonds link cysteine 206-cysteine 219, cysteine 213-cysteine 229, and cysteine 231-cysteine 241. Laminin G-like domains lie at 289–486 and 493–686; these read VATF…SFRC and DPVT…APFC. Residue aspartate 335 coordinates Ca(2+). N-linked (GlcNAc...) asparagine glycosylation occurs at asparagine 338. Leucine 352 and methionine 420 together coordinate Ca(2+). 5 disulfides stabilise this stretch: cysteine 450–cysteine 486, cysteine 657–cysteine 686, cysteine 694–cysteine 705, cysteine 699–cysteine 714, and cysteine 716–cysteine 726. Residues 690–727 form the EGF-like 2 domain; it reads TLKQCASAPCRNGGVCREGWNRFICDCIGTGFLGRVCE. 2 Laminin G-like domains span residues 732–904 and 918–1093; these read VLSY…ITYC and DPVT…ERGC. 2 residues coordinate Ca(2+): aspartate 779 and leucine 796. A glycan (N-linked (GlcNAc...) asparagine) is linked at asparagine 841. Arginine 854 contacts Ca(2+). Intrachain disulfides connect cysteine 1065/cysteine 1093, cysteine 1100/cysteine 1111, cysteine 1105/cysteine 1120, and cysteine 1122/cysteine 1132. The EGF-like 3 domain maps to 1096–1133; sequence PSTTCTEESCANQGVCLQQWDGFTCDCTMTSYGGPVCN. Residues 1137 to 1345 enclose the Laminin G-like 6 domain; the sequence is TTYIFGKGGA…HLRLVGEGPS (209 aa). The Ca(2+) site is built by aspartate 1189 and valine 1206. Asparagine 1236 carries N-linked (GlcNAc...) asparagine glycosylation. Ca(2+)-binding residues include isoleucine 1288 and asparagine 1290. A disordered region spans residues 1373 to 1392; it reads ATTTTRRGRSPTLRDSTTQN. O-linked (Xyl...) (heparan sulfate) serine glycosylation occurs at serine 1400. Disordered regions lie at residues 1458 to 1489 and 1525 to 1626; these read ATQD…CEEP and TLLS…PGAV. Residues 1637-1657 traverse the membrane as a helical segment; the sequence is GMVVGIVAAAALCILILLYAM. Residues 1658-1712 lie on the Cytoplasmic side of the membrane; sequence YKYRNRDEGSYQVDQSRNYISNSAQSNGAVVKEKAPAAPKTPSKAKKNKDKEYYV. The interval 1679-1712 is disordered; it reads NSAQSNGAVVKEKAPAAPKTPSKAKKNKDKEYYV.

It belongs to the neurexin family. As to quaternary structure, the laminin G-like domain 1 binds to NXPH1. Interacts with PATJ. Interacts with CBLN1, CBLN2 and, less avidly, with CBLN4. Specific isoforms bind neuroligins NLGN1, NLGN2 and NLGN3. Specific isoforms bind to alpha-dystroglycan. Interacts (via Laminin G-like 1 domain) with IGSF21 (Ig-like 1 domain) in a trans-interaction manner. Interacts with CLSTN3. In terms of processing, O-glycosylated; contains heparan sulfate. Heparan sulfate attachment is required for synapse development by mediating interactions with neuroligins. In terms of tissue distribution, predominantly expressed in brain.

The protein localises to the presynaptic cell membrane. Functionally, neuronal cell surface protein that may be involved in cell recognition and cell adhesion. May mediate intracellular signaling. The protein is Neurexin-2 (NRXN2) of Homo sapiens (Human).